We begin with the raw amino-acid sequence, 630 residues long: Probable potassium transport system protein Kup (630 aa).

The next 12 helical transmembrane spans lie at 17-37, 51-71, 105-125, 144-164, 175-195, 218-238, 255-275, 283-303, 344-364, 374-394, 402-422, and 428-448; these read LAIAAIGVVFGDIGTSPLYSL, PSAILGVISLLFWAIILVVGI, ITGLMMALGIFGACMFYGDAV, PQLSHLVLPITIVILIALFWI, LFGPIMVLWFVTIAVLGIYHI, VLLAYVVLGSVVLVLTGAEAL, YVLVMPSLVLNYFGQGALLLL, PFFLLAPQWAALPLVVLSTVA, IYVPVVNWLLLFVILCIVIGF, YGIAVTATMVITTILAAVVMV, LLVAMIIGVFLVIDLGFFGAN, and QGGWLPLGIGALLFFLLMTWY.

The protein belongs to the HAK/KUP transporter (TC 2.A.72) family.

The protein resides in the cell inner membrane. It catalyses the reaction K(+)(in) + H(+)(in) = K(+)(out) + H(+)(out). Its function is as follows. Transport of potassium into the cell. Likely operates as a K(+):H(+) symporter. The sequence is that of Probable potassium transport system protein Kup from Burkholderia pseudomallei (strain K96243).